A 51-amino-acid chain; its full sequence is Cytoplasmic FMR1-interacting protein 1 (51 aa).

Belongs to the CYFIP family. As to quaternary structure, component of the WAVE1 complex composed of ABI2, CYFIP1 or CYFIP2, BRK1, NCKAP1 and WASF1/WAVE1. Within the complex, a heterodimer containing NCKAP1 and CYFIP1 interacts with a heterotrimer formed by WAVE1, ABI2 and BRK1. Component of the CYFIP1-EIF4E-FMR1 complex which is composed of CYFIP, EIF4E and FMR1. Interacts with FMR1 but does not bind to related proteins FXR1 or FXR2. Interaction with EIF4E stimulates FMR1 binding. Component of the WAVE2 complex composed of ABI1, CYFIP1/SRA1, NCKAP1/NAP1 (NCKAP1l/HEM1 in hematopoietic cells) and WASF2/WAVE2. Interacts with the active GTP-bound form of RAC1. Interacts through its C-terminus with the C-terminus of DPYSL2/CRMP2 which is necessary for DPYSL2-induced axon outgrowth. Interacts with NYAP1, NYAP2 and MYO16. Interacts with TMEM108 (via N-terminus); the interaction associates TMEM108 with the WAVE1 complex.

It localises to the cytoplasm. The protein localises to the perinuclear region. Its subcellular location is the cell projection. It is found in the lamellipodium. The protein resides in the ruffle. It localises to the synapse. The protein localises to the synaptosome. In terms of biological role, component of the CYFIP1-EIF4E-FMR1 complex which binds to the mRNA cap and mediates translational repression. In the CYFIP1-EIF4E-FMR1 complex this subunit is an adapter between EIF4E and FMR1. Promotes the translation repression activity of FMR1 in brain probably by mediating its association with EIF4E and mRNA. Regulates formation of membrane ruffles and lamellipodia. Plays a role in axon outgrowth. Binds to F-actin but not to RNA. Part of the WAVE complex that regulates actin filament reorganization via its interaction with the Arp2/3 complex. Actin remodeling activity is regulated by RAC1. Regulator of epithelial morphogenesis. As component of the WAVE1 complex, required for BDNF-NTRK2 endocytic trafficking and signaling from early endosomes. This Bos taurus (Bovine) protein is Cytoplasmic FMR1-interacting protein 1.